Consider the following 295-residue polypeptide: 4-hydroxy-tetrahydrodipicolinate synthase (295 aa).

Residue Thr48 coordinates pyruvate. The Proton donor/acceptor role is filled by Tyr136. Lys164 acts as the Schiff-base intermediate with substrate in catalysis. Residue Ile206 coordinates pyruvate.

Belongs to the DapA family. Homotetramer; dimer of dimers.

It is found in the cytoplasm. It catalyses the reaction L-aspartate 4-semialdehyde + pyruvate = (2S,4S)-4-hydroxy-2,3,4,5-tetrahydrodipicolinate + H2O + H(+). The protein operates within amino-acid biosynthesis; L-lysine biosynthesis via DAP pathway; (S)-tetrahydrodipicolinate from L-aspartate: step 3/4. Catalyzes the condensation of (S)-aspartate-beta-semialdehyde [(S)-ASA] and pyruvate to 4-hydroxy-tetrahydrodipicolinate (HTPA). This Actinobacillus pleuropneumoniae serotype 5b (strain L20) protein is 4-hydroxy-tetrahydrodipicolinate synthase.